Here is a 479-residue protein sequence, read N- to C-terminus: Ribosomal RNA small subunit methyltransferase F (479 aa).

S-adenosyl-L-methionine contacts are provided by residues 125–131, E149, D176, and D194; that span reads AAAPGSK. The active-site Nucleophile is the C247.

The protein belongs to the class I-like SAM-binding methyltransferase superfamily. RsmB/NOP family.

The protein resides in the cytoplasm. It catalyses the reaction cytidine(1407) in 16S rRNA + S-adenosyl-L-methionine = 5-methylcytidine(1407) in 16S rRNA + S-adenosyl-L-homocysteine + H(+). Specifically methylates the cytosine at position 1407 (m5C1407) of 16S rRNA. The sequence is that of Ribosomal RNA small subunit methyltransferase F from Shigella boydii serotype 18 (strain CDC 3083-94 / BS512).